We begin with the raw amino-acid sequence, 152 residues long: SsrA-binding protein (152 aa).

Belongs to the SmpB family.

The protein localises to the cytoplasm. Functionally, required for rescue of stalled ribosomes mediated by trans-translation. Binds to transfer-messenger RNA (tmRNA), required for stable association of tmRNA with ribosomes. tmRNA and SmpB together mimic tRNA shape, replacing the anticodon stem-loop with SmpB. tmRNA is encoded by the ssrA gene; the 2 termini fold to resemble tRNA(Ala) and it encodes a 'tag peptide', a short internal open reading frame. During trans-translation Ala-aminoacylated tmRNA acts like a tRNA, entering the A-site of stalled ribosomes, displacing the stalled mRNA. The ribosome then switches to translate the ORF on the tmRNA; the nascent peptide is terminated with the 'tag peptide' encoded by the tmRNA and targeted for degradation. The ribosome is freed to recommence translation, which seems to be the essential function of trans-translation. The protein is SsrA-binding protein of Rickettsia bellii (strain RML369-C).